A 392-amino-acid polypeptide reads, in one-letter code: 8-amino-7-oxononanoate synthase (392 aa).

108-109 (GF) contributes to the pyridoxal 5'-phosphate binding site. Residue His133 coordinates substrate. Residues Ser180, 205–208 (DDAH), and 236–239 (TLSK) each bind pyridoxal 5'-phosphate. Lys239 bears the N6-(pyridoxal phosphate)lysine mark. Thr353 provides a ligand contact to substrate.

The protein belongs to the class-II pyridoxal-phosphate-dependent aminotransferase family. BioF subfamily. In terms of assembly, homodimer. Pyridoxal 5'-phosphate serves as cofactor.

It carries out the reaction 6-carboxyhexanoyl-[ACP] + L-alanine + H(+) = (8S)-8-amino-7-oxononanoate + holo-[ACP] + CO2. Its pathway is cofactor biosynthesis; biotin biosynthesis. Catalyzes the decarboxylative condensation of pimeloyl-[acyl-carrier protein] and L-alanine to produce 8-amino-7-oxononanoate (AON), [acyl-carrier protein], and carbon dioxide. This Bacillus pumilus (strain SAFR-032) protein is 8-amino-7-oxononanoate synthase.